We begin with the raw amino-acid sequence, 87 residues long: Small ribosomal subunit protein uS17 (87 aa).

The protein belongs to the universal ribosomal protein uS17 family. Part of the 30S ribosomal subunit.

In terms of biological role, one of the primary rRNA binding proteins, it binds specifically to the 5'-end of 16S ribosomal RNA. The polypeptide is Small ribosomal subunit protein uS17 (Staphylococcus aureus (strain Mu3 / ATCC 700698)).